Reading from the N-terminus, the 179-residue chain is UPF0227 protein Shewmr7_1806 (179 aa).

Belongs to the UPF0227 family.

The polypeptide is UPF0227 protein Shewmr7_1806 (Shewanella sp. (strain MR-7)).